We begin with the raw amino-acid sequence, 258 residues long: MNTSSSFKALASPPLISTSRPTTKSFPNPRFTSRFSPKPITCMRDSLNLGSNPKAPSPFSLATVSVDAPLGTKTSDKLRILVSEFRSLTEPIDRVKRLLNYAATLAPLDESARISENRVTGCTTQVWLEIKMDEFGRMRFKADSDSEISKGFCSCLIWILDGAKPEEVMGVRSEDLSEMNVGVHGKEQSRVNTWHNVLMSMQKRTMTLVATDVAHQRGQRPPHQHDLLFKYVNGSYMESSKVHDYSISLLPLYYDFII.

Residues M1–T32 are disordered. A compositionally biased stretch (polar residues) spans L15–T32. The Cysteine persulfide intermediate role is filled by C122.

The protein belongs to the SufE family. In terms of tissue distribution, highly expressed in flowers and pollen, and at low levels in roots, leaves and stems.

It is found in the plastid. Its subcellular location is the chloroplast. The protein operates within cofactor biosynthesis; iron-sulfur cluster biosynthesis. Functionally, participates in cysteine desulfurization mediated by NFS2. Can activate the cysteine desulfurase activity of NFS2 in vitro. Cysteine desulfurization mobilizes sulfur from L-cysteine to yield L-alanine and supplies the inorganic sulfur for iron-sulfur (Fe-S) cluster formation. This Arabidopsis thaliana (Mouse-ear cress) protein is SufE-like protein 2, chloroplastic (SUFE2).